The chain runs to 70 residues: Large ribosomal subunit protein bL33m (70 aa).

It belongs to the bacterial ribosomal protein bL33 family. Component of the mitochondrial large ribosomal subunit (mt-LSU). Mature yeast 74S mitochondrial ribosomes consist of a small (37S) and a large (54S) subunit. The 37S small subunit contains a 15S ribosomal RNA (15S mt-rRNA) and 34 different proteins. The 54S large subunit contains a 21S rRNA (21S mt-rRNA) and 46 different proteins. bL33m stabilizes the tRNA acceptor stem in the E-site.

It is found in the mitochondrion. In terms of biological role, component of the mitochondrial ribosome (mitoribosome), a dedicated translation machinery responsible for the synthesis of mitochondrial genome-encoded proteins, including at least some of the essential transmembrane subunits of the mitochondrial respiratory chain. The mitoribosomes are attached to the mitochondrial inner membrane and translation products are cotranslationally integrated into the membrane. This chain is Large ribosomal subunit protein bL33m (MRPL39), found in Saccharomyces cerevisiae (strain ATCC 204508 / S288c) (Baker's yeast).